The primary structure comprises 308 residues: Taste receptor type 2 member 41 (308 aa).

Over 1 to 7 (MLPTLSV) the chain is Extracellular. The chain crosses the membrane as a helical span at residues 8–28 (FFMLTFVLLCFLGILANGFIV). The Cytoplasmic portion of the chain corresponds to 29 to 60 (LMLSREWLLRGRLLPSDMILFSLGTSRFFQQC). The helical transmembrane segment at 61 to 81 (VGLVNSFYYFLHLVEYSGSLA) threads the bilayer. Over 82–88 (RQLISLH) the chain is Extracellular. Residues 89 to 109 (WDFLNSATFWFCTWLSVLFCI) form a helical membrane-spanning segment. Residues 110 to 128 (KIANFSHPAFLWLKWRFPA) lie on the Cytoplasmic side of the membrane. Residues 129–149 (LVPWFLLGSILVSVIVTLLFF) form a helical membrane-spanning segment. Topologically, residues 150–186 (WGNHTIYQAFLRRKFTGNTTFKEWNRRLEIDYFMPLK) are extracellular. Residues N152 and N167 are each glycosylated (N-linked (GlcNAc...) asparagine). A helical transmembrane segment spans residues 187-207 (VVTMSIPCSLFLVSILLLISS). The Cytoplasmic portion of the chain corresponds to 208–239 (LRRHSLRMQHNTHSLQDPNVQAHSRALKSLIS). Residues 240 to 260 (FLVLYAVSFVSMIIDATVFIS) form a helical membrane-spanning segment. At 261-264 (SDNV) the chain is on the extracellular side. A helical membrane pass occupies residues 265–285 (WYWPWQIILYFCMSVHPFILI). At 286 to 308 (TNNLRFRGTFRQLLLLARGFWVA) the chain is on the cytoplasmic side.

The protein belongs to the G-protein coupled receptor T2R family. Expressed in subsets of taste receptor cells of the tongue and palate epithelium and exclusively in gustducin-positive cells.

The protein resides in the membrane. In terms of biological role, receptor that may play a role in the perception of bitterness and is gustducin-linked. May play a role in sensing the chemical composition of the gastrointestinal content. The activity of this receptor may stimulate alpha gustducin, mediate PLC-beta-2 activation and lead to the gating of TRPM5. This is Taste receptor type 2 member 41 (Tas2r41) from Mus musculus (Mouse).